The chain runs to 458 residues: Bifunctional protein GlmU (458 aa).

A pyrophosphorylase region spans residues 1–231 (MSNRALSVVV…QTEVEGVNNR (231 aa)). UDP-N-acetyl-alpha-D-glucosamine contacts are provided by residues 11-14 (LAAG), K25, Q78, 83-84 (GT), 105-107 (YGD), G142, E156, N171, and N229. D107 contributes to the Mg(2+) binding site. N229 lines the Mg(2+) pocket. Residues 232-252 (LQLARLERLFQREQAERLLLA) are linker. Positions 253–458 (GVMLSDPDRF…ANWTRPVKKK (206 aa)) are N-acetyltransferase. UDP-N-acetyl-alpha-D-glucosamine-binding residues include R335 and K353. H365 (proton acceptor) is an active-site residue. UDP-N-acetyl-alpha-D-glucosamine contacts are provided by Y368 and N379. Acetyl-CoA is bound by residues A382, 388 to 389 (NY), S407, A425, and R442.

This sequence in the N-terminal section; belongs to the N-acetylglucosamine-1-phosphate uridyltransferase family. The protein in the C-terminal section; belongs to the transferase hexapeptide repeat family. Homotrimer. Requires Mg(2+) as cofactor.

It localises to the cytoplasm. It carries out the reaction alpha-D-glucosamine 1-phosphate + acetyl-CoA = N-acetyl-alpha-D-glucosamine 1-phosphate + CoA + H(+). The catalysed reaction is N-acetyl-alpha-D-glucosamine 1-phosphate + UTP + H(+) = UDP-N-acetyl-alpha-D-glucosamine + diphosphate. It participates in nucleotide-sugar biosynthesis; UDP-N-acetyl-alpha-D-glucosamine biosynthesis; N-acetyl-alpha-D-glucosamine 1-phosphate from alpha-D-glucosamine 6-phosphate (route II): step 2/2. It functions in the pathway nucleotide-sugar biosynthesis; UDP-N-acetyl-alpha-D-glucosamine biosynthesis; UDP-N-acetyl-alpha-D-glucosamine from N-acetyl-alpha-D-glucosamine 1-phosphate: step 1/1. Its pathway is bacterial outer membrane biogenesis; LPS lipid A biosynthesis. Its function is as follows. Catalyzes the last two sequential reactions in the de novo biosynthetic pathway for UDP-N-acetylglucosamine (UDP-GlcNAc). The C-terminal domain catalyzes the transfer of acetyl group from acetyl coenzyme A to glucosamine-1-phosphate (GlcN-1-P) to produce N-acetylglucosamine-1-phosphate (GlcNAc-1-P), which is converted into UDP-GlcNAc by the transfer of uridine 5-monophosphate (from uridine 5-triphosphate), a reaction catalyzed by the N-terminal domain. The protein is Bifunctional protein GlmU of Sodalis glossinidius (strain morsitans).